Reading from the N-terminus, the 318-residue chain is NADH-ubiquinone oxidoreductase chain 1 (318 aa).

8 consecutive transmembrane segments (helical) span residues 2–22 (FMINVLLLIVPILLAVAFLTL), 70–90 (MFIIAPILALTLALTMWIPLP), 100–120 (LGILFMLAMSSLAVYSILWSG), 147–167 (AIILLSVLLMSGSFTLSTLII), 171–191 (YLWLIFPSWPLAMMWFISTLA), 217–237 (AGPFALFFLAEYANIIMMNIF), 253–273 (ELYSINFTIKALLLTCSFLWI), and 294–314 (LPLTLALCMWHVSLPIMLSSI).

This sequence belongs to the complex I subunit 1 family. In terms of assembly, core subunit of respiratory chain NADH dehydrogenase (Complex I) which is composed of 45 different subunits.

It is found in the mitochondrion inner membrane. The enzyme catalyses a ubiquinone + NADH + 5 H(+)(in) = a ubiquinol + NAD(+) + 4 H(+)(out). Core subunit of the mitochondrial membrane respiratory chain NADH dehydrogenase (Complex I) which catalyzes electron transfer from NADH through the respiratory chain, using ubiquinone as an electron acceptor. Essential for the catalytic activity and assembly of complex I. This chain is NADH-ubiquinone oxidoreductase chain 1 (MT-ND1), found in Equus caballus (Horse).